The following is a 453-amino-acid chain: Glutamyl-tRNA(Gln) amidotransferase subunit A (453 aa).

Active-site charge relay system residues include K56 and S131. S155 (acyl-ester intermediate) is an active-site residue.

The protein belongs to the amidase family. GatA subfamily. In terms of assembly, heterotrimer of A, B and C subunits.

The catalysed reaction is L-glutamyl-tRNA(Gln) + L-glutamine + ATP + H2O = L-glutaminyl-tRNA(Gln) + L-glutamate + ADP + phosphate + H(+). Functionally, allows the formation of correctly charged Gln-tRNA(Gln) through the transamidation of misacylated Glu-tRNA(Gln) in organisms which lack glutaminyl-tRNA synthetase. The reaction takes place in the presence of glutamine and ATP through an activated gamma-phospho-Glu-tRNA(Gln). This is Glutamyl-tRNA(Gln) amidotransferase subunit A from Campylobacter jejuni (strain RM1221).